A 1157-amino-acid chain; its full sequence is Hephaestin (1157 aa).

Residues 1-23 (MKAGHLLWALLLMHSLCSLPTDG) form the signal peptide. Plastocyanin-like domains lie at 24–206 (AIRN…LITC), 218–366 (QRKD…VDSC), 370–559 (PPVE…LLVC), 569–717 (KQKG…VSQC), 730–902 (ASRV…LVIC), and 910–1066 (NGGR…SHEE). The Extracellular portion of the chain corresponds to 24-1109 (AIRNYYLGIQ…PVKNVEILSS (1086 aa)). N49 and N54 each carry an N-linked (GlcNAc...) asparagine glycan. Na(+)-binding residues include G70 and Y73. 2 residues coordinate Cu(2+): H126 and H128. Residue H126 participates in O2 binding. Ca(2+) is bound by residues K134, D152, and D153. N-linked (GlcNAc...) asparagine glycosylation occurs at N164. The cysteines at positions 180 and 206 are disulfide-linked. H186 and H188 together coordinate Cu(2+). Residue H186 coordinates O2. Residue N236 is glycosylated (N-linked (GlcNAc...) asparagine). S265 is a Na(+) binding site. A disulfide bridge links C285 with C366. Positions 304, 347, and 352 each coordinate Cu(2+). Na(+) contacts are provided by Y416, G425, and Y428. A disulfide bridge connects residues C533 and C559. N-linked (GlcNAc...) asparagine glycosylation is present at N587. S616 provides a ligand contact to Na(+). An intrachain disulfide couples C636 to C717. Cu(2+)-binding residues include H655, C698, H703, and M708. Residues N713 and N757 are each glycosylated (N-linked (GlcNAc...) asparagine). 2 residues coordinate Na(+): F768 and G777. C876 and C902 are joined by a disulfide. An N-linked (GlcNAc...) asparagine glycan is attached at N930. H999, H1002, H1004, H1044, C1045, H1046, H1050, and M1055 together coordinate Cu(2+). H1002 and H1004 together coordinate O2. Residue H1046 participates in O2 binding. The helical transmembrane segment at 1110-1130 (ALIAICVVLLLIALALGGVVW) threads the bilayer. At 1131 to 1157 (YQHRQRKLRRNRRSILDDSFKLLSLKQ) the chain is on the cytoplasmic side. 3 positions are modified to phosphoserine: S1144, S1149, and S1154.

Belongs to the multicopper oxidase family. In terms of assembly, part of a complex composed of SLC40A1/ferroportin, TF/transferrin and HEPH/hephaestin that transfers iron from cells to transferrin. Cu cation serves as cofactor. In terms of tissue distribution, highly expressed in small intestine and colon.

The protein localises to the basolateral cell membrane. It catalyses the reaction 4 Fe(2+) + O2 + 4 H(+) = 4 Fe(3+) + 2 H2O. Plasma membrane ferroxidase that mediates the extracellular conversion of ferrous/Fe(2+) iron into its ferric/Fe(3+) form. Couples ferroportin which specifically exports ferrous/Fe(2+) iron from cells to transferrin that only binds and shuttles extracellular ferric/Fe(3+) iron throughout the body. By helping iron transfer from cells to blood mainly contributes to dietary iron absorption by the intestinal epithelium and more generally regulates iron levels in the body. The polypeptide is Hephaestin (Rattus norvegicus (Rat)).